The sequence spans 402 residues: Arginine deiminase (402 aa).

Cys391 functions as the Amidino-cysteine intermediate in the catalytic mechanism.

It belongs to the arginine deiminase family.

The protein localises to the cytoplasm. The enzyme catalyses L-arginine + H2O = L-citrulline + NH4(+). The protein operates within amino-acid degradation; L-arginine degradation via ADI pathway; carbamoyl phosphate from L-arginine: step 1/2. The chain is Arginine deiminase from Mycobacterium marinum (strain ATCC BAA-535 / M).